A 201-amino-acid polypeptide reads, in one-letter code: Small ribosomal subunit protein uS4c (201 aa).

The span at 1–14 shows a compositional bias: basic residues; sequence MSRYRGPRFKKIRR. Positions 1 to 44 are disordered; that stretch reads MSRYRGPRFKKIRRLGALPGLTSKRPRAGSDPRNQSRSGKKSQY. The S4 RNA-binding domain maps to 89–152; it reads MRLDNTLFRL…NSRTLVQNLL (64 aa).

Belongs to the universal ribosomal protein uS4 family. In terms of assembly, part of the 30S ribosomal subunit. Contacts protein S5. The interaction surface between S4 and S5 is involved in control of translational fidelity.

The protein resides in the plastid. It is found in the chloroplast. In terms of biological role, one of the primary rRNA binding proteins, it binds directly to 16S rRNA where it nucleates assembly of the body of the 30S subunit. Functionally, with S5 and S12 plays an important role in translational accuracy. The chain is Small ribosomal subunit protein uS4c (rps4) from Draba nemorosa (Woodland whitlowgrass).